The following is a 412-amino-acid chain: Gamma-glutamyl phosphate reductase (412 aa).

This sequence belongs to the gamma-glutamyl phosphate reductase family.

It localises to the cytoplasm. The enzyme catalyses L-glutamate 5-semialdehyde + phosphate + NADP(+) = L-glutamyl 5-phosphate + NADPH + H(+). Its pathway is amino-acid biosynthesis; L-proline biosynthesis; L-glutamate 5-semialdehyde from L-glutamate: step 2/2. Catalyzes the NADPH-dependent reduction of L-glutamate 5-phosphate into L-glutamate 5-semialdehyde and phosphate. The product spontaneously undergoes cyclization to form 1-pyrroline-5-carboxylate. This is Gamma-glutamyl phosphate reductase from Bartonella henselae (strain ATCC 49882 / DSM 28221 / CCUG 30454 / Houston 1) (Rochalimaea henselae).